Reading from the N-terminus, the 112-residue chain is Protein F-112 (112 aa).

Functionally, essential for virus function. The polypeptide is Protein F-112 (Saccharolobus solfataricus (Sulfolobus solfataricus)).